The primary structure comprises 148 residues: Protein H2A.6 (148 aa).

Positions 120-148 (GAAEKESTKSPKKKAATKSPKKKTAATKE) are disordered. Short sequence motifs (SPKK motif) lie at residues 129–132 (SPKK) and 138–141 (SPKK). Positions 129-148 (SPKKKAATKSPKKKTAATKE) are enriched in basic residues.

This sequence belongs to the histone H2A family. The nucleosome is a histone octamer containing two molecules each of H2A, H2B, H3 and H4 assembled in one H3-H4 heterotetramer and two H2A-H2B heterodimers. The octamer wraps approximately 147 bp of DNA. In terms of tissue distribution, abundant in meristematic tissues.

Its subcellular location is the nucleus. The protein localises to the chromosome. In terms of biological role, core component of nucleosome. Nucleosomes wrap and compact DNA into chromatin, limiting DNA accessibility to the cellular machineries which require DNA as a template. Histones thereby play a central role in transcription regulation, DNA repair, DNA replication and chromosomal stability. DNA accessibility is regulated via a complex set of post-translational modifications of histones, also called histone code, and nucleosome remodeling. The polypeptide is Protein H2A.6 (H2A-3) (Triticum aestivum (Wheat)).